The primary structure comprises 432 residues: Gamma-glutamyl phosphate reductase (432 aa).

It belongs to the gamma-glutamyl phosphate reductase family.

The protein localises to the cytoplasm. The catalysed reaction is L-glutamate 5-semialdehyde + phosphate + NADP(+) = L-glutamyl 5-phosphate + NADPH + H(+). It participates in amino-acid biosynthesis; L-proline biosynthesis; L-glutamate 5-semialdehyde from L-glutamate: step 2/2. Functionally, catalyzes the NADPH-dependent reduction of L-glutamate 5-phosphate into L-glutamate 5-semialdehyde and phosphate. The product spontaneously undergoes cyclization to form 1-pyrroline-5-carboxylate. The sequence is that of Gamma-glutamyl phosphate reductase from Methylobacterium radiotolerans (strain ATCC 27329 / DSM 1819 / JCM 2831 / NBRC 15690 / NCIMB 10815 / 0-1).